We begin with the raw amino-acid sequence, 290 residues long: Microtubule-associated protein P320 (290 aa).

8 repeats span residues 1 to 38, 39 to 76, 77 to 114, 115 to 152, 153 to 190, 191 to 228, 229 to 266, and 267 to 290; these read SEYR…PIDP and SEYR…DESH. Residues 251–290 form a disordered region; that stretch reads SHFLTTTHEAYKPIDPSEYRQKRTVGEEVTTDMRHVDESH. The segment covering 259–290 has biased composition (basic and acidic residues); sequence EAYKPIDPSEYRQKRTVGEEVTTDMRHVDESH.

It localises to the cytoplasm. The protein resides in the cytoskeleton. The chain is Microtubule-associated protein P320 from Trypanosoma brucei brucei.